A 632-amino-acid polypeptide reads, in one-letter code: PAN2-PAN3 deadenylation complex subunit PAN3 (632 aa).

2 disordered regions span residues 1–22 (MQPG…PHQL) and 99–127 (PTFG…PPTL). Basic residues predominate over residues 107–116 (MNHRASHHHQ). Polar residues predominate over residues 117-127 (SPQMAQQPPTL). Residues 223 to 494 (KADSAIIGDI…TINEIMPMIG (272 aa)) are pseudokinase domain. Residues Arg-270, 321-328 (DYYPLAGT), and 397-398 (NK) contribute to the ATP site. A coiled-coil region spans residues 495–533 (GRFFTVMENMQAKTDVLEAELSREMENGRLFRLVAKMNT). Residues 534-632 (VLERVEHGTD…LLGTNMMLHR (99 aa)) form a knob domain region.

The protein belongs to the protein kinase superfamily. PAN3 family. Homodimer. Forms a heterotrimer with a catalytic subunit PAN2 to form the poly(A)-nuclease (PAN) deadenylation complex. Interacts (via PAM-2 motif) with poly(A)-binding protein (via PABC domain), conferring substrate specificity of the enzyme complex. Interacts with the GW182 family protein ain-1. As to expression, highly expressed in germ cells.

It is found in the cytoplasm. The protein resides in the P-body. Its function is as follows. Regulatory subunit of the poly(A)-nuclease (PAN) deadenylation complex, one of two cytoplasmic mRNA deadenylases involved in general and miRNA-mediated mRNA turnover. PAN specifically shortens poly(A) tails of RNA and the activity is stimulated by poly(A)-binding protein (PABP). PAN deadenylation is followed by rapid degradation of the shortened mRNA tails by the CCR4-NOT complex. Deadenylated mRNAs are then degraded by two alternative mechanisms, namely exosome-mediated 3'-5' exonucleolytic degradation, or deadenylation-dependent mRNA decaping and subsequent 5'-3' exonucleolytic degradation by XRN1. PAN3 acts as a positive regulator for PAN activity, recruiting the catalytic subunit PAN2 to mRNA via its interaction with RNA and PABP, and to miRNA targets via its interaction with GW182 family proteins. Within the PAN complex, may positively regulate fertility. In Caenorhabditis elegans, this protein is PAN2-PAN3 deadenylation complex subunit PAN3.